The chain runs to 455 residues: Phosphoglucosamine mutase (455 aa).

Residue serine 108 is the Phosphoserine intermediate of the active site. Residues serine 108, aspartate 246, aspartate 248, and aspartate 250 each contribute to the Mg(2+) site. Residue serine 108 is modified to Phosphoserine.

Belongs to the phosphohexose mutase family. It depends on Mg(2+) as a cofactor. Post-translationally, activated by phosphorylation.

The catalysed reaction is alpha-D-glucosamine 1-phosphate = D-glucosamine 6-phosphate. In terms of biological role, catalyzes the conversion of glucosamine-6-phosphate to glucosamine-1-phosphate. This Frankia alni (strain DSM 45986 / CECT 9034 / ACN14a) protein is Phosphoglucosamine mutase.